The sequence spans 79 residues: Cytochrome b (79 aa).

3 helical membrane passes run 1–7 (TALFLAM), 31–52 (WLIR…YLHI), and 67–79 (WNIG…LTMM). Heme b-binding residues include His-37 and His-51.

This sequence belongs to the cytochrome b family. In terms of assembly, the cytochrome bc1 complex contains 3 respiratory subunits (MT-CYB, CYC1 and UQCRFS1), 2 core proteins (UQCRC1 and UQCRC2) and probably 6 low-molecular weight proteins. Heme b is required as a cofactor.

The protein resides in the mitochondrion inner membrane. Its function is as follows. Component of the ubiquinol-cytochrome c reductase complex (complex III or cytochrome b-c1 complex) that is part of the mitochondrial respiratory chain. The b-c1 complex mediates electron transfer from ubiquinol to cytochrome c. Contributes to the generation of a proton gradient across the mitochondrial membrane that is then used for ATP synthesis. In Julidochromis regani (Convict julie), this protein is Cytochrome b (mt-cyb).